The following is a 343-amino-acid chain: Ketol-acid reductoisomerase (NADP(+)) (343 aa).

The KARI N-terminal Rossmann domain maps to 7 to 186; it reads TTVYYDEDAD…GCTRAGVIET (180 aa). NADP(+) is bound by residues 30–33, R53, S56, S58, and 88–91; these read YGSQ and DTIQ. The active site involves H112. G138 contributes to the NADP(+) binding site. The KARI C-terminal knotted domain maps to 187-329; the sequence is SFQEEVETDL…ENLRELFAWG (143 aa). D195, E199, E231, and E235 together coordinate Mg(2+). Residue S256 coordinates substrate.

It belongs to the ketol-acid reductoisomerase family. Requires Mg(2+) as cofactor.

The catalysed reaction is (2R)-2,3-dihydroxy-3-methylbutanoate + NADP(+) = (2S)-2-acetolactate + NADPH + H(+). The enzyme catalyses (2R,3R)-2,3-dihydroxy-3-methylpentanoate + NADP(+) = (S)-2-ethyl-2-hydroxy-3-oxobutanoate + NADPH + H(+). It functions in the pathway amino-acid biosynthesis; L-isoleucine biosynthesis; L-isoleucine from 2-oxobutanoate: step 2/4. The protein operates within amino-acid biosynthesis; L-valine biosynthesis; L-valine from pyruvate: step 2/4. Its function is as follows. Involved in the biosynthesis of branched-chain amino acids (BCAA). Catalyzes an alkyl-migration followed by a ketol-acid reduction of (S)-2-acetolactate (S2AL) to yield (R)-2,3-dihydroxy-isovalerate. In the isomerase reaction, S2AL is rearranged via a Mg-dependent methyl migration to produce 3-hydroxy-3-methyl-2-ketobutyrate (HMKB). In the reductase reaction, this 2-ketoacid undergoes a metal-dependent reduction by NADPH to yield (R)-2,3-dihydroxy-isovalerate. The sequence is that of Ketol-acid reductoisomerase (NADP(+)) from Haloarcula marismortui (strain ATCC 43049 / DSM 3752 / JCM 8966 / VKM B-1809) (Halobacterium marismortui).